We begin with the raw amino-acid sequence, 308 residues long: HPr kinase/phosphorylase (308 aa).

Active-site residues include histidine 136 and lysine 157. 151–158 (GESGIGKS) is an ATP binding site. Serine 158 provides a ligand contact to Mg(2+). The active-site Proton acceptor; for phosphorylation activity. Proton donor; for dephosphorylation activity is aspartate 175. An important for the catalytic mechanism of both phosphorylation and dephosphorylation region spans residues 198–207 (IEVRGMGIID). Residue glutamate 199 coordinates Mg(2+). Residue arginine 240 is part of the active site. The interval 261 to 266 (PIRPGR) is important for the catalytic mechanism of dephosphorylation.

This sequence belongs to the HPrK/P family. Homohexamer. Mg(2+) serves as cofactor.

It carries out the reaction [HPr protein]-L-serine + ATP = [HPr protein]-O-phospho-L-serine + ADP + H(+). The enzyme catalyses [HPr protein]-O-phospho-L-serine + phosphate + H(+) = [HPr protein]-L-serine + diphosphate. Catalyzes the ATP- as well as the pyrophosphate-dependent phosphorylation of a specific serine residue in HPr, a phosphocarrier protein of the phosphoenolpyruvate-dependent sugar phosphotransferase system (PTS). HprK/P also catalyzes the pyrophosphate-producing, inorganic phosphate-dependent dephosphorylation (phosphorolysis) of seryl-phosphorylated HPr (P-Ser-HPr). The two antagonistic activities of HprK/P are regulated by several intracellular metabolites, which change their concentration in response to the absence or presence of rapidly metabolisable carbon sources (glucose, fructose, etc.) in the growth medium. Therefore, by controlling the phosphorylation state of HPr, HPrK/P is a sensor enzyme that plays a major role in the regulation of carbon metabolism and sugar transport: it mediates carbon catabolite repression (CCR), and regulates PTS-catalyzed carbohydrate uptake and inducer exclusion. The protein is HPr kinase/phosphorylase of Clostridium kluyveri (strain NBRC 12016).